Consider the following 74-residue polypeptide: Cytochrome b559 subunit alpha (74 aa).

The helical transmembrane segment at 22–36 threads the bilayer; the sequence is VIHTVTIPSLFVAGW. A heme-binding site is contributed by His24.

This sequence belongs to the PsbE/PsbF family. Heterodimer of an alpha subunit and a beta subunit. PSII is composed of 1 copy each of membrane proteins PsbA, PsbB, PsbC, PsbD, PsbE, PsbF, PsbH, PsbI, PsbJ, PsbK, PsbL, PsbM, PsbT, PsbX, PsbY, PsbZ, Psb30/Ycf12, at least 3 peripheral proteins of the oxygen-evolving complex and a large number of cofactors. It forms dimeric complexes. Requires heme b as cofactor.

The protein localises to the plastid. It localises to the cyanelle thylakoid membrane. Its function is as follows. This b-type cytochrome is tightly associated with the reaction center of photosystem II (PSII). PSII is a light-driven water:plastoquinone oxidoreductase that uses light energy to abstract electrons from H(2)O, generating O(2) and a proton gradient subsequently used for ATP formation. It consists of a core antenna complex that captures photons, and an electron transfer chain that converts photonic excitation into a charge separation. The chain is Cytochrome b559 subunit alpha from Cyanophora paradoxa.